A 246-amino-acid polypeptide reads, in one-letter code: MSQEREPFSPRPEGPEQVTSTEESLLVPLPHGKCEKENMDLEDTTLYRNKSIQTDIEDRSILEDNSNSQPIKAQPQRLPQPNTSALEQSEEETGKIQNGHVGLSNINGIHNGVKHVPADHRNISAPVSQKMHRKIQSSLSVSSDGSKKSKESSAYSQKPSASPEDGCVHCILTCLFCEFLTLCNIVVGQASCGICTSEACCCCCTEEMGDDCNCPCDMDCGIMDACCESSDCLEICMECCGICFPS.

Disordered stretches follow at residues 1–93 (MSQE…EEET) and 134–164 (KIQS…ASPE). Residues 1–170 (MSQEREPFSP…ASPEDGCVHC (170 aa)) lie on the Extracellular side of the membrane. The segment covering 63 to 87 (EDNSNSQPIKAQPQRLPQPNTSALE) has biased composition (polar residues). Residues 74 to 246 (QPQRLPQPNT…MECCGICFPS (173 aa)) form the MDFI domain. The helical transmembrane segment at 171-188 (ILTCLFCEFLTLCNIVVG) threads the bilayer. The Cytoplasmic portion of the chain corresponds to 189–246 (QASCGICTSEACCCCCTEEMGDDCNCPCDMDCGIMDACCESSDCLEICMECCGICFPS).

This sequence belongs to the MDFI family. In terms of tissue distribution, expressed broadly at a low level in the early embryo.

Its subcellular location is the cytoplasm. The protein localises to the cell membrane. It localises to the secreted. Its function is as follows. Required to control the activity of various transcription factors through their sequestration in the cytoplasm. Retains nuclear Zic proteins in the cytoplasm and inhibits their transcriptional activation. Required for dorsoanterior development. Necessary for siamois to activate downstream target genes, including gsc, during execution of the dorsal organizer program. Also regulates the transcriptional activity of TCF7L1/TCF3 by interacting directly with TCF7L1/TCF3 and preventing it from binding DNA. Involved in the development of lymphatic vessel valves. It is required to promote lymphatic endothelial cell migration, in a process that involves down-regulation of integrin beta 1 activation and control of cell adhesion to the extracellular matrix. In Xenopus laevis (African clawed frog), this protein is MyoD family inhibitor domain-containing protein.